We begin with the raw amino-acid sequence, 551 residues long: Solute carrier family 22 member 6 (551 aa).

Topologically, residues 1-23 are cytoplasmic; sequence MAFNDLLKQVGGVGRFQRIQVTL. Residues 24 to 44 form a helical membrane-spanning segment; sequence VVLPLLLMASHNTLQNFTAAI. Over 45 to 135 the chain is Extracellular; sequence PPHHCRPPAH…LVCSHRALRQ (91 aa). Residues N56, N92, and N113 are each glycosylated (N-linked (GlcNAc...) asparagine). The chain crosses the membrane as a helical span at residues 136–156; that stretch reads LGQSLYMAGVLIGAMVFGYLA. Residues 157–164 lie on the Cytoplasmic side of the membrane; the sequence is DRLGRRKV. The helical transmembrane segment at 165 to 187 threads the bilayer; the sequence is LILNYLQTAVSGTCAAFSPNFTV. Over 188-195 the chain is Extracellular; sequence YCTFRLLS. The chain crosses the membrane as a helical span at residues 196–216; sequence GMSLAGIALNCMTLNVEWMPI. Topologically, residues 217–224 are cytoplasmic; it reads HTRAYVGT. Residues 225 to 245 form a helical membrane-spanning segment; that stretch reads LAGYVYSTGQFLLAGVAYAVP. Residues 246 to 248 lie on the Extracellular side of the membrane; that stretch reads HWR. The helical transmembrane segment at 249-269 threads the bilayer; that stretch reads YLQLLVSVPFFAFFVYSWFFI. At 270-337 the chain is on the cytoplasmic side; it reads ESARWYSTPG…ELLRCPALRH (68 aa). Residues 338–358 traverse the membrane as a helical segment; that stretch reads LFLCLSLLWFATSFAYYGLVM. The Extracellular portion of the chain corresponds to 359-368; sequence DLQGFGVSIY. The chain crosses the membrane as a helical span at residues 369–389; that stretch reads LIQVIFGAVDLPAKLVCFLVI. Over 390–395 the chain is Cytoplasmic; that stretch reads NSLGRR. A helical transmembrane segment spans residues 396-416; sequence PAQMASLLLAGICILVNGVIP. At 417–425 the chain is on the extracellular side; that stretch reads RDQSIVRTS. The chain crosses the membrane as a helical span at residues 426–446; the sequence is LAVLGKGCLASSFNCIFLYTG. The Cytoplasmic portion of the chain corresponds to 447-484; it reads ELYPTMIRQTGLGMGSTMARVGSIVSPLVSMTSELYPS. The chain crosses the membrane as a helical span at residues 485–505; the sequence is LPLFIYGAVPVAASAATALLP. The Extracellular portion of the chain corresponds to 506-551; it reads ETLGQPLPDTVQDLESRRRGKPRRQQQEQQKQMVPLQASVQEKNGL. The interval 520–551 is disordered; the sequence is ESRRRGKPRRQQQEQQKQMVPLQASVQEKNGL.

This sequence belongs to the major facilitator (TC 2.A.1) superfamily. Organic cation transporter (TC 2.A.1.19) family. Post-translationally, glycosylated. Glycosylation is necessary for proper targeting of the transporter to the plasma membrane.

It localises to the basolateral cell membrane. Its subcellular location is the basal cell membrane. It catalyses the reaction (6R)-L-erythro-5,6,7,8-tetrahydrobiopterin(out) + a dicarboxylate(in) = (6R)-L-erythro-5,6,7,8-tetrahydrobiopterin(in) + a dicarboxylate(out). The catalysed reaction is L-erythro-7,8-dihydrobiopterin(out) + a dicarboxylate(in) = L-erythro-7,8-dihydrobiopterin(in) + a dicarboxylate(out). It carries out the reaction L-sepiapterin(out) + a dicarboxylate(in) = L-sepiapterin(in) + a dicarboxylate(out). The enzyme catalyses prostaglandin F2alpha(out) + a dicarboxylate(in) = prostaglandin F2alpha(in) + a dicarboxylate(out). It catalyses the reaction prostaglandin E2(out) + a dicarboxylate(in) = prostaglandin E2(in) + a dicarboxylate(out). The catalysed reaction is 3',5'-cyclic AMP(out) + a dicarboxylate(in) = 3',5'-cyclic AMP(in) + a dicarboxylate(out). It carries out the reaction 3',5'-cyclic GMP(out) + a dicarboxylate(in) = 3',5'-cyclic GMP(in) + a dicarboxylate(out). The enzyme catalyses urate(out) + a dicarboxylate(in) = urate(in) + a dicarboxylate(out). It catalyses the reaction kynurenate(out) + glutarate(in) = kynurenate(in) + glutarate(out). The catalysed reaction is (indol-3-yl)acetate(out) + a dicarboxylate(in) = (indol-3-yl)acetate(in) + a dicarboxylate(out). It carries out the reaction indoxyl sulfate(out) + a dicarboxylate(in) = indoxyl sulfate(in) + a dicarboxylate(out). The enzyme catalyses N-benzoylglycine(out) + a dicarboxylate(in) = N-benzoylglycine(in) + a dicarboxylate(out). It catalyses the reaction 3-carboxy-4-methyl-5-propyl-2-furanpropanoate(out) + a dicarboxylate(in) = 3-carboxy-4-methyl-5-propyl-2-furanpropanoate(in) + a dicarboxylate(out). Functionally, secondary active transporter that functions as a Na(+)-independent organic anion (OA)/dicarboxylate antiporter where the uptake of one molecule of OA into the cell is coupled with an efflux of one molecule of intracellular dicarboxylate such as 2-oxoglutarate or glutarate. Mediates the uptake of OA across the basolateral side of proximal tubule epithelial cells, thereby contributing to the renal elimination of endogenous OA from the systemic circulation into the urine. Functions as a biopterin transporters involved in the uptake and the secretion of coenzymes tetrahydrobiopterin (BH4), dihydrobiopterin (BH2) and sepiapterin to urine, thereby determining baseline levels of blood biopterins. Transports prostaglandin E2 (PGE2) and prostaglandin F2-alpha (PGF2-alpha) and may contribute to their renal excretion. Also mediates the uptake of cyclic nucleotides such as cAMP and cGMP. Involved in the transport of neuroactive tryptophan metabolites kynurenate (KYNA) and xanthurenate (XA) and may contribute to their secretion from the brain. May transport glutamate. Also involved in the disposition of uremic toxins and potentially toxic xenobiotics by the renal organic anion secretory pathway, helping reduce their undesired toxicological effects on the body. Uremic toxins include the indoxyl sulfate (IS), hippurate/N-benzoylglycine (HA), indole acetate (IA), 3-carboxy-4- methyl-5-propyl-2-furanpropionate (CMPF) and urate. Xenobiotics include the mycotoxin ochratoxin (OTA). May also contribute to the transport of organic compounds in testes across the blood-testis-barrier. May also work as a bidirectional OA/dicarboxylate exchanger. This is Solute carrier family 22 member 6 from Oryctolagus cuniculus (Rabbit).